The primary structure comprises 337 residues: Mediator of RNA polymerase II transcription subunit 19 (337 aa).

Disordered stretches follow at residues 1–38 (MMSN…KTTI), 155–234 (YVTP…LPGG), and 297–337 (QMSS…MSQF). A compositionally biased stretch (polar residues) spans 28 to 38 (QDSSGTLKTTI). Composition is skewed to basic residues over residues 159-171 (ARKH…KQKH) and 208-221 (RKKR…KKKN). The stretch at 189-223 (LETYEKKHKKQKRHEDDKERKKRKKEKKRKKKNQS) forms a coiled coil. Low complexity predominate over residues 297 to 309 (QMSSGGLLGSVLG). Gly residues predominate over residues 310–330 (TSGGPGGGGGGGGGGGGGVGG).

It belongs to the Mediator complex subunit 19 family. In terms of assembly, component of the Mediator complex.

Its subcellular location is the nucleus. Component of the Mediator complex, a coactivator involved in the regulated transcription of nearly all RNA polymerase II-dependent genes. Mediator functions as a bridge to convey information from gene-specific regulatory proteins to the basal RNA polymerase II transcription machinery. Mediator is recruited to promoters by direct interactions with regulatory proteins and serves as a scaffold for the assembly of a functional preinitiation complex with RNA polymerase II and the general transcription factors. The polypeptide is Mediator of RNA polymerase II transcription subunit 19 (MED19) (Drosophila melanogaster (Fruit fly)).